Consider the following 411-residue polypeptide: Phospholipase A1-II 6 (411 aa).

The active-site Acyl-ester intermediate is serine 226. Catalysis depends on charge relay system residues serine 226, aspartate 296, and histidine 334.

This sequence belongs to the AB hydrolase superfamily. Lipase family.

It localises to the cytoplasm. Its function is as follows. Acylhydrolase that catalyzes the hydrolysis of phospholipids at the sn-1 position. This chain is Phospholipase A1-II 6, found in Oryza sativa subsp. japonica (Rice).